Here is a 142-residue protein sequence, read N- to C-terminus: Small ribosomal subunit protein uS19 (142 aa).

N-acetylserine is present on Ser2. Glycyl lysine isopeptide (Lys-Gly) (interchain with G-Cter in ubiquitin) cross-links involve residues Lys24, Lys35, and Lys64.

The protein belongs to the universal ribosomal protein uS19 family. Component of the small ribosomal subunit (SSU). Mature yeast ribosomes consist of a small (40S) and a large (60S) subunit. The 40S small subunit contains 1 molecule of ribosomal RNA (18S rRNA) and 33 different proteins (encoded by 57 genes). The large 60S subunit contains 3 rRNA molecules (25S, 5.8S and 5S rRNA) and 46 different proteins (encoded by 81 genes).

It is found in the cytoplasm. Component of the ribosome, a large ribonucleoprotein complex responsible for the synthesis of proteins in the cell. The small ribosomal subunit (SSU) binds messenger RNAs (mRNAs) and translates the encoded message by selecting cognate aminoacyl-transfer RNA (tRNA) molecules. The large subunit (LSU) contains the ribosomal catalytic site termed the peptidyl transferase center (PTC), which catalyzes the formation of peptide bonds, thereby polymerizing the amino acids delivered by tRNAs into a polypeptide chain. The nascent polypeptides leave the ribosome through a tunnel in the LSU and interact with protein factors that function in enzymatic processing, targeting, and the membrane insertion of nascent chains at the exit of the ribosomal tunnel. uS19 is involved in the nuclear export of the small ribosomal subunit precursor. Has a role in the late stage of the assembly of pre-40S particles within the nucleus and controls their export to the cytoplasm. The polypeptide is Small ribosomal subunit protein uS19 (Saccharomyces cerevisiae (strain ATCC 204508 / S288c) (Baker's yeast)).